Here is a 903-residue protein sequence, read N- to C-terminus: Translation initiation factor IF-2 (903 aa).

Residues 66–296 (QATLKGEGPV…GRSRKREMEN (231 aa)) form a disordered region. The segment covering 121–132 (NTDETRVQEHKP) has biased composition (basic and acidic residues). Composition is skewed to low complexity over residues 139-152 (AGDAPAAEGTAAAG) and 178-195 (AATGQRAQGGEAGRGQQS). Residues 204 to 231 (EGRSRQDENKGSAREDQANRFATRDKEA) are compositionally biased toward basic and acidic residues. Over residues 246-255 (RRPAHSKPLR) the composition is skewed to basic residues. Basic and acidic residues-rich tracts occupy residues 263–276 (VTKDLPEKRRDRSN) and 285–296 (ESGRSRKREMEN). Residues 403-572 (ERPPVVTVMG…LLTADVAELK (170 aa)) enclose the tr-type G domain. The tract at residues 412-419 (GHVDHGKT) is G1. 412 to 419 (GHVDHGKT) contributes to the GTP binding site. A G2 region spans residues 437–441 (GITQH). A G3 region spans residues 458-461 (DTPG). GTP-binding positions include 458–462 (DTPGH) and 512–515 (NKID). A G4 region spans residues 512–515 (NKID). Residues 548–550 (SAV) form a G5 region.

Belongs to the TRAFAC class translation factor GTPase superfamily. Classic translation factor GTPase family. IF-2 subfamily.

It localises to the cytoplasm. Its function is as follows. One of the essential components for the initiation of protein synthesis. Protects formylmethionyl-tRNA from spontaneous hydrolysis and promotes its binding to the 30S ribosomal subunits. Also involved in the hydrolysis of GTP during the formation of the 70S ribosomal complex. This is Translation initiation factor IF-2 from Moorella thermoacetica (strain ATCC 39073 / JCM 9320).